A 463-amino-acid polypeptide reads, in one-letter code: Glutamate--tRNA ligase (463 aa).

Residues 8–18 (PSPTGYLHIGG) carry the 'HIGH' region motif. The 'KMSKS' region motif lies at 236-240 (RLSKR). Lys239 lines the ATP pocket.

This sequence belongs to the class-I aminoacyl-tRNA synthetase family. Glutamate--tRNA ligase type 1 subfamily. In terms of assembly, monomer.

The protein localises to the cytoplasm. The catalysed reaction is tRNA(Glu) + L-glutamate + ATP = L-glutamyl-tRNA(Glu) + AMP + diphosphate. Its function is as follows. Catalyzes the attachment of glutamate to tRNA(Glu) in a two-step reaction: glutamate is first activated by ATP to form Glu-AMP and then transferred to the acceptor end of tRNA(Glu). This is Glutamate--tRNA ligase from Nitrosomonas europaea (strain ATCC 19718 / CIP 103999 / KCTC 2705 / NBRC 14298).